We begin with the raw amino-acid sequence, 704 residues long: CAP-Gly domain-containing linker protein 4 (704 aa).

ANK repeat units follow at residues 65–101 (TSVS…NVND), 149–180 (TNMN…DVDA), and 186–215 (NFGT…NPAF). The CAP-Gly 1 domain maps to 303 to 345 (GTTEFASGQWAGIELDEPEGKNNGSVGRVQYFKCAPKYGIFAP). Residues 353–479 (KDGRKTTTHT…SATSAANNSH (127 aa)) are disordered. 3 stretches are compositionally biased toward low complexity: residues 360-371 (THTPSTRATPHA), 423-432 (SMSSSSSSSS), and 440-461 (PKKL…SLPS). Residues 504 to 546 (GTTNFAPGYWYGIELEKPHGKNDGSVGGVQYFSCSPRYGIFAP) enclose the CAP-Gly 2 domain. Ser556 and Ser608 each carry phosphoserine. Residues 643–685 (GPTDFASGIWLGLELRSAKGKNDGAVGDKRYFTCKPNYGVLVR) enclose the CAP-Gly 3 domain.

The protein is CAP-Gly domain-containing linker protein 4 (Clip4) of Mus musculus (Mouse).